An 87-amino-acid chain; its full sequence is U15-lycotoxin-Ls1h (87 aa).

The N-terminal stretch at 1 to 20 (MNSKIFAVLLLLGLLSCVLS) is a signal peptide. Positions 21–66 (DQYCPKSSITACKKMNTRNDCCKDDDCTGGSWCCATPCGNFCKYPT) constitute a WAP domain. Intrachain disulfides connect Cys24-Cys54, Cys32-Cys58, Cys41-Cys53, Cys42-Cys80, and Cys47-Cys62.

The protein belongs to the venom protein 11 family. 01 (wap-1) subfamily. In terms of processing, contains 5 disulfide bonds. As to expression, expressed by the venom gland.

It is found in the secreted. Has antibacterial activity. The sequence is that of U15-lycotoxin-Ls1h from Lycosa singoriensis (Wolf spider).